The primary structure comprises 82 residues: Translational regulator CsrA (82 aa).

Belongs to the CsrA/RsmA family. Homodimer; the beta-strands of each monomer intercalate to form a hydrophobic core, while the alpha-helices form wings that extend away from the core.

It localises to the cytoplasm. A translational regulator that binds mRNA to regulate translation initiation and/or mRNA stability. Usually binds in the 5'-UTR at or near the Shine-Dalgarno sequence preventing ribosome-binding, thus repressing translation. Its main target seems to be the major flagellin gene, while its function is anatagonized by FliW. The polypeptide is Translational regulator CsrA (Geobacillus sp. (strain WCH70)).